The chain runs to 456 residues: Toxin CfTX-1 (456 aa).

Positions 1-20 (MVKMLFFAFLPLLFMTGIAA) are cleaved as a signal peptide.

The protein belongs to the jellyfish toxin family. Type I subfamily. In terms of assembly, oligomer. In terms of processing, contains disulfide bonds. As to expression, nematocytes.

The protein resides in the secreted. It localises to the nematocyst. It is found in the target cell membrane. Its function is as follows. May cause profound effects on the cardiovascular system of anesthetized rats (at 25 ug/kg), since the fraction containing this toxin and CfTX-2 produces an initial increase in mean arterial pressure, followed by cardiovascular collapse in all animals within 1 minute of injection. To note, the same fraction does not induce significant change in heart rate. Has weak hemolytic activity. Is lethal to crayfish. Causes cutaneous inflammation in humans. May act as a pore-forming toxin, disrupting normal transmembrane ion concentration gradients in susceptible cells. The sequence is that of Toxin CfTX-1 from Chironex fleckeri (Australian box jellyfish).